Here is a 386-residue protein sequence, read N- to C-terminus: Sphingosine 1-phosphate receptor 4 (386 aa).

Over 1–56 (MNISTWSTLVTPESCHRLAASGHSLLIVLHYNHSGRLASRGGSEDGGGLGMLRGPS) the chain is Extracellular. N-linked (GlcNAc...) asparagine glycosylation is found at Asn-2 and Asn-32. The helical transmembrane segment at 57-77 (VAAGCLVVLENAMVLAAIAIY) threads the bilayer. The Cytoplasmic segment spans residues 78 to 87 (MRSRRWVYYC). The chain crosses the membrane as a helical span at residues 88–108 (LLNITLSDLLTGLAYVVNVLL). At 109 to 120 (SGTRTFQLSPVH) the chain is on the extracellular side. A helical transmembrane segment spans residues 121–141 (WFLREGLLFMALAASTFSLLF). Over 142-163 (TAGERFATMVRVAESGATKTSR) the chain is Cytoplasmic. Residues 164 to 184 (VYGCIGLCWLLAAILGLLPLL) form a helical membrane-spanning segment. The Extracellular portion of the chain corresponds to 185 to 208 (GWNCVCAFPRCSSLLPLYSKGYVL). The chain crosses the membrane as a helical span at residues 209–229 (FCVVVFALILVAILSLYGAIF). The Cytoplasmic portion of the chain corresponds to 230–254 (RVVRANGQKSPRPPARRKSRRLLNT). The helical transmembrane segment at 255–275 (VLMILVAFVVCWGPLFGLLLA) threads the bilayer. The Extracellular segment spans residues 276 to 290 (DIFGSNVWAQEYLRG). Residues 291–311 (MDWILALAVFNSAINPLIYSF) form a helical membrane-spanning segment. The Cytoplasmic segment spans residues 312 to 386 (RSREVQRAVL…LSSISSVRST (75 aa)). Cys-325 carries S-palmitoyl cysteine lipidation.

The protein belongs to the G-protein coupled receptor 1 family. In terms of tissue distribution, specifically expressed in fetal and adult lymphoid and hematopoietic tissue. Expressed in lung, spleen, thymus and lymph node but absent in other non-lymphatic tissue. Coexpressed with GNA15 at the same relative levels in all tissues examined, with the highest levels in adult spleen and lung.

It localises to the cell membrane. Functionally, receptor for the lysosphingolipid sphingosine 1-phosphate (S1P). S1P is a bioactive lysophospholipid that elicits diverse physiological effect on most types of cells and tissues. May be involved in cell migration processes that are specific for lymphocytes. The chain is Sphingosine 1-phosphate receptor 4 (S1pr4) from Mus musculus (Mouse).